A 101-amino-acid chain; its full sequence is uncharacterized protein (101 aa).

Helical transmembrane passes span valine 10 to isoleucine 30 and isoleucine 67 to isoleucine 87.

It is found in the membrane. This is an uncharacterized protein from Acanthamoeba polyphaga (Amoeba).